The sequence spans 226 residues: Prolactin (226 aa).

The N-terminal stretch at 1 to 29 (MNSQGSAQKAGTLLLLLISNLLFCQNVQP) is a signal peptide. Cys33 and Cys38 are joined by a disulfide. Residues Ser53 and Ser117 each carry the phosphoserine modification. Intrachain disulfides connect Cys85–Cys201 and Cys218–Cys226.

The protein belongs to the somatotropin/prolactin family. Interacts with PRLR.

The protein localises to the secreted. Its function is as follows. Prolactin acts primarily on the mammary gland by promoting lactation. This is Prolactin (Prl) from Mus musculus (Mouse).